We begin with the raw amino-acid sequence, 395 residues long: Pyruvate synthase subunit PorA (395 aa).

As to quaternary structure, heterotetramer of one alpha, one beta, one delta and one gamma chain.

The catalysed reaction is 2 oxidized [2Fe-2S]-[ferredoxin] + pyruvate + CoA = 2 reduced [2Fe-2S]-[ferredoxin] + acetyl-CoA + CO2 + H(+). The polypeptide is Pyruvate synthase subunit PorA (porA) (Pyrococcus horikoshii (strain ATCC 700860 / DSM 12428 / JCM 9974 / NBRC 100139 / OT-3)).